Here is a 147-residue protein sequence, read N- to C-terminus: Allograft inflammatory factor 1 (147 aa).

S2 is subject to N-acetylserine. K11 carries the post-translational modification N6-acetyllysine. S39 is subject to Phosphoserine. 2 consecutive EF-hand domains span residues 45–80 (SKLEGFKEKYMEFDLNGNGDIDIMSLKRMLEKLGVP) and 81–115 (KTHLELKKLIGEVSSGSGETFSYPDFLRMMLGKRS). Residues D58, N60, N62, D64, T100, and D105 each coordinate Ca(2+). Residues 128–147 (AREKEKPTGPPAKKAISELP) form a disordered region.

In terms of assembly, homodimer (Potential). Monomer. Interacts with LCP1. Phosphorylated on serine residues.

The protein resides in the cytoplasm. It is found in the cytoskeleton. The protein localises to the cell projection. It localises to the ruffle membrane. Its subcellular location is the phagocytic cup. Functionally, actin-binding protein that enhances membrane ruffling and RAC activation. Enhances the actin-bundling activity of LCP1. Binds calcium. Plays a role in RAC signaling and in phagocytosis. May play a role in macrophage activation and function. Promotes the proliferation of vascular smooth muscle cells and of T-lymphocytes. Enhances lymphocyte migration. Plays a role in vascular inflammation. The protein is Allograft inflammatory factor 1 (AIF1) of Macaca mulatta (Rhesus macaque).